A 54-amino-acid polypeptide reads, in one-letter code: Ovomucoid (54 aa).

A Kazal-like domain is found at 4-54; the sequence is VDCSDYPKPACSLDYMPLCGSDSKTYSNKCNFCNAVVDSNGTLTLSHFEKC. 3 disulfides stabilise this stretch: C6–C36, C14–C33, and C22–C54. N-linked (GlcNAc...) asparagine glycosylation is present at N43.

It localises to the secreted. The protein is Ovomucoid of Chroicocephalus ridibundus (Black-headed gull).